The primary structure comprises 342 residues: Isopentenyl-diphosphate delta-isomerase (342 aa).

11 to 12 is a binding site for substrate; the sequence is RK. Residues Ser68, 69-71, Ser99, and Asn128 each bind FMN; that span reads SMT. Substrate is bound at residue 99-101; the sequence is SQR. Position 162 (Gln162) interacts with substrate. Residue Glu163 participates in Mg(2+) binding. FMN-binding positions include Lys194, Ser219, Thr224, 275–277, and 296–297; these read GVR and AK.

Belongs to the IPP isomerase type 2 family. As to quaternary structure, homooctamer. Dimer of tetramers. FMN serves as cofactor. NADPH is required as a cofactor. It depends on Mg(2+) as a cofactor.

The protein resides in the cytoplasm. The enzyme catalyses isopentenyl diphosphate = dimethylallyl diphosphate. Its function is as follows. Involved in the biosynthesis of isoprenoids. Catalyzes the 1,3-allylic rearrangement of the homoallylic substrate isopentenyl (IPP) to its allylic isomer, dimethylallyl diphosphate (DMAPP). The chain is Isopentenyl-diphosphate delta-isomerase from Legionella pneumophila subsp. pneumophila (strain Philadelphia 1 / ATCC 33152 / DSM 7513).